The following is a 736-amino-acid chain: Phosphoribosylformylglycinamidine synthase subunit PurL (736 aa).

The active site involves His49. Tyr52 and Lys91 together coordinate ATP. Glu93 contributes to the Mg(2+) binding site. Substrate is bound by residues 94 to 97 (SHNH) and Arg116. His95 functions as the Proton acceptor in the catalytic mechanism. Asp117 lines the Mg(2+) pocket. Gln240 is a substrate binding site. Asp268 provides a ligand contact to Mg(2+). A substrate-binding site is contributed by 312–314 (ESQ). 2 residues coordinate ATP: Asp493 and Gly530. Asn531 contributes to the Mg(2+) binding site. Ser533 is a substrate binding site.

The protein belongs to the FGAMS family. As to quaternary structure, monomer. Part of the FGAM synthase complex composed of 1 PurL, 1 PurQ and 2 PurS subunits.

The protein resides in the cytoplasm. It carries out the reaction N(2)-formyl-N(1)-(5-phospho-beta-D-ribosyl)glycinamide + L-glutamine + ATP + H2O = 2-formamido-N(1)-(5-O-phospho-beta-D-ribosyl)acetamidine + L-glutamate + ADP + phosphate + H(+). Its pathway is purine metabolism; IMP biosynthesis via de novo pathway; 5-amino-1-(5-phospho-D-ribosyl)imidazole from N(2)-formyl-N(1)-(5-phospho-D-ribosyl)glycinamide: step 1/2. Its function is as follows. Part of the phosphoribosylformylglycinamidine synthase complex involved in the purines biosynthetic pathway. Catalyzes the ATP-dependent conversion of formylglycinamide ribonucleotide (FGAR) and glutamine to yield formylglycinamidine ribonucleotide (FGAM) and glutamate. The FGAM synthase complex is composed of three subunits. PurQ produces an ammonia molecule by converting glutamine to glutamate. PurL transfers the ammonia molecule to FGAR to form FGAM in an ATP-dependent manner. PurS interacts with PurQ and PurL and is thought to assist in the transfer of the ammonia molecule from PurQ to PurL. The protein is Phosphoribosylformylglycinamidine synthase subunit PurL of Rhodopseudomonas palustris (strain HaA2).